Consider the following 186-residue polypeptide: Orotate phosphoribosyltransferase (186 aa).

5-phospho-alpha-D-ribose 1-diphosphate contacts are provided by residues Arg-93, Lys-94, Lys-97, His-99, and 119-127; that span reads EDVTTTGGS. Residues Thr-123 and Arg-151 each coordinate orotate.

Belongs to the purine/pyrimidine phosphoribosyltransferase family. PyrE subfamily. In terms of assembly, homodimer. The cofactor is Mg(2+).

It catalyses the reaction orotidine 5'-phosphate + diphosphate = orotate + 5-phospho-alpha-D-ribose 1-diphosphate. It participates in pyrimidine metabolism; UMP biosynthesis via de novo pathway; UMP from orotate: step 1/2. Its function is as follows. Catalyzes the transfer of a ribosyl phosphate group from 5-phosphoribose 1-diphosphate to orotate, leading to the formation of orotidine monophosphate (OMP). The protein is Orotate phosphoribosyltransferase of Pyrococcus horikoshii (strain ATCC 700860 / DSM 12428 / JCM 9974 / NBRC 100139 / OT-3).